A 258-amino-acid polypeptide reads, in one-letter code: Type III pantothenate kinase (258 aa).

An ATP-binding site is contributed by 6–13 (DVGNTNTV). Substrate contacts are provided by residues Tyr-100 and 107–110 (GADR). Asp-109 serves as the catalytic Proton acceptor. Asp-129 serves as a coordination point for K(+). Thr-132 lines the ATP pocket. Position 184 (Thr-184) interacts with substrate.

Belongs to the type III pantothenate kinase family. As to quaternary structure, homodimer. Requires NH4(+) as cofactor. K(+) serves as cofactor.

The protein resides in the cytoplasm. The catalysed reaction is (R)-pantothenate + ATP = (R)-4'-phosphopantothenate + ADP + H(+). It functions in the pathway cofactor biosynthesis; coenzyme A biosynthesis; CoA from (R)-pantothenate: step 1/5. Its function is as follows. Catalyzes the phosphorylation of pantothenate (Pan), the first step in CoA biosynthesis. This chain is Type III pantothenate kinase, found in Bacillus velezensis (strain DSM 23117 / BGSC 10A6 / LMG 26770 / FZB42) (Bacillus amyloliquefaciens subsp. plantarum).